Reading from the N-terminus, the 357-residue chain is 3-isopropylmalate dehydrogenase (357 aa).

76-89 is a binding site for NAD(+); that stretch reads GPKWDDLPSEKRPE. Arg-96, Arg-106, Arg-135, and Asp-224 together coordinate substrate. Asp-224, Asp-248, and Asp-252 together coordinate Mg(2+). 282 to 294 is a binding site for NAD(+); the sequence is GSAPDIAGQDKAN.

The protein belongs to the isocitrate and isopropylmalate dehydrogenases family. LeuB type 1 subfamily. As to quaternary structure, homodimer. It depends on Mg(2+) as a cofactor. Mn(2+) serves as cofactor.

The protein localises to the cytoplasm. The enzyme catalyses (2R,3S)-3-isopropylmalate + NAD(+) = 4-methyl-2-oxopentanoate + CO2 + NADH. It functions in the pathway amino-acid biosynthesis; L-leucine biosynthesis; L-leucine from 3-methyl-2-oxobutanoate: step 3/4. Its function is as follows. Catalyzes the oxidation of 3-carboxy-2-hydroxy-4-methylpentanoate (3-isopropylmalate) to 3-carboxy-4-methyl-2-oxopentanoate. The product decarboxylates to 4-methyl-2 oxopentanoate. The polypeptide is 3-isopropylmalate dehydrogenase (Nitratidesulfovibrio vulgaris (strain ATCC 29579 / DSM 644 / CCUG 34227 / NCIMB 8303 / VKM B-1760 / Hildenborough) (Desulfovibrio vulgaris)).